We begin with the raw amino-acid sequence, 145 residues long: Transmembrane protein 170A (145 aa).

Residues 1 to 50 (MIEALIVGEMQDVQIGFVKQILSLNLVPRSNNTTCGNNTSLCDFSEMWYG) are Lumenal-facing. 2 N-linked (GlcNAc...) asparagine glycosylation sites follow: asparagine 31 and asparagine 37. Residues 51–71 (VFLWAVVSSLIFHLPAALLAL) form a helical membrane-spanning segment. The Cytoplasmic portion of the chain corresponds to 72–81 (ATLRRHKVAR). The helical transmembrane segment at 82 to 102 (FFPLGILLMGIIGPLFGGVLT) threads the bilayer. The Lumenal portion of the chain corresponds to 103–117 (SAAIAGVYKAAGKSM). A helical transmembrane segment spans residues 118–138 (FSLEALVFGVGQSLFIFIISF). Residues 139 to 145 (LRILATL) are Cytoplasmic-facing.

This sequence belongs to the TMEM170 family.

It localises to the endoplasmic reticulum membrane. The protein localises to the nucleus envelope. In terms of biological role, may regulate membrane morphogenesis in the endoplasmic reticulum (ER) by promoting ER sheet formation at the expense of ER tubules. The polypeptide is Transmembrane protein 170A (tmem170a) (Danio rerio (Zebrafish)).